A 915-amino-acid polypeptide reads, in one-letter code: Coiled-coil domain-containing protein 57 (915 aa).

Positions 1-502 are centrosomal targeting domain; it reads MLPLGSEPAL…MHGLPRPGAQ (502 aa). 4 coiled-coil regions span residues 92–173, 214–422, 456–483, and 521–548; these read VSEL…QRQE, LEAL…LERD, KSQV…VTLE, and IQRL…LSHQ. Disordered stretches follow at residues 555-574, 606-653, and 724-915; these read TAAE…GDAA, PLKM…QAGP, and QHGG…NIMD. Residues 606-915 are microtubule binding domain; that stretch reads PLKMSSPHAE…PKIRNYNIMD (310 aa). Residues 613 to 627 are compositionally biased toward polar residues; sequence HAESQPSVRTSTETT. Residues 628–652 are compositionally biased toward low complexity; sequence GGSAQAGQAGGSVQAGQAGGSVQAG. Basic and acidic residues predominate over residues 745 to 758; that stretch reads GREDAKSAEDEAPS. Composition is skewed to polar residues over residues 781 to 794, 819 to 830, and 841 to 852; these read PKTQ…TCKS, SHSSSSFASGTL, and SSPSGVTSQGDS. Residues 879–891 are compositionally biased toward low complexity; it reads KTAAQAKAKTTGA.

As to quaternary structure, interacts with CEP63; the interaction is required for their location to proximal end of centrioles. Interacts with microtubules.

Its subcellular location is the cytoplasm. It is found in the cytoskeleton. The protein localises to the microtubule organizing center. The protein resides in the centrosome. It localises to the centriolar satellite. Its subcellular location is the centriole. It is found in the spindle. Its function is as follows. Pleiotropic regulator of centriole duplication, mitosis, and ciliogenesis. Critical interface between centrosome and microtubule-mediated cellular processes. Centriole duplication protein required for recruitment of CEP63, CEP152, and PLK4 to the centrosome. Independent of its centrosomal targeting, localizes to and interacts with microtubules and regulates microtubule nucleation, stability, and mitotic progression. This Homo sapiens (Human) protein is Coiled-coil domain-containing protein 57.